The chain runs to 168 residues: Small ribosomal subunit protein uS7c (168 aa).

It belongs to the universal ribosomal protein uS7 family. As to quaternary structure, part of the 30S ribosomal subunit.

Its subcellular location is the plastid. The protein localises to the chloroplast. Functionally, one of the primary rRNA binding proteins, it binds directly to 16S rRNA where it nucleates assembly of the head domain of the 30S subunit. The protein is Small ribosomal subunit protein uS7c (rps7) of Chlamydomonas reinhardtii (Chlamydomonas smithii).